The sequence spans 71 residues: Small ribosomal subunit protein bS18 (71 aa).

This sequence belongs to the bacterial ribosomal protein bS18 family. As to quaternary structure, part of the 30S ribosomal subunit. Forms a tight heterodimer with protein bS6.

In terms of biological role, binds as a heterodimer with protein bS6 to the central domain of the 16S rRNA, where it helps stabilize the platform of the 30S subunit. This Dichelobacter nodosus (strain VCS1703A) protein is Small ribosomal subunit protein bS18.